A 745-amino-acid polypeptide reads, in one-letter code: Centromere protein I (745 aa).

Positions 1 to 27 (MATPRLTRNSQQQNRISQGSNSRQTTL) are enriched in polar residues. Positions 1–58 (MATPRLTRNSQQQNRISQGSNSRQTTLLDWKVKDKAGNSKSVLEESSSLEDSNHADDQ) are disordered. Positions 39–50 (SKSVLEESSSLE) are enriched in low complexity.

Belongs to the CENP-I/CTF3 family. As to quaternary structure, component of the CENPA-CAD complex, composed of CENPI, CENPK, CENPL, CENPO, CENPP, CENPQ, CENPR and CENPS. The CENPA-CAD complex interacts with the CENPA-NAC complex, at least composed of CENPA, CENPC, CENPH, CENPM, CENPN, CENPT and CENPU. Interacts with SENP6. Post-translationally, sumoylated. Sumoylated form can be polyubiquitinated by RNF4, leading to its degradation. Desumoylation by SENP6 prevents its degradation. In terms of tissue distribution, highly expressed in testis, ovary and spleen. A much lower mRNA level is found in brain and lung, and no expression is detected in liver, kidney, heart, muscle, pituitary gland, prostate, epididymis and seminal vesicle.

The protein localises to the nucleus. It localises to the chromosome. It is found in the centromere. Its function is as follows. Component of the CENPA-CAD (nucleosome distal) complex, a complex recruited to centromeres which is involved in assembly of kinetochore proteins, mitotic progression and chromosome segregation. May be involved in incorporation of newly synthesized CENPA into centromeres via its interaction with the CENPA-NAC complex. Required for the localization of CENPF, MAD1L1 and MAD2 (MAD2L1 or MAD2L2) to kinetochores. Involved in the response of gonadal tissues to follicle-stimulating hormone. This chain is Centromere protein I (Cenpi), found in Rattus norvegicus (Rat).